A 144-amino-acid chain; its full sequence is Superoxide dismutase [Mn], mitochondrial (144 aa).

Positions 10, 58, and 143 each coordinate Mn(2+).

The protein belongs to the iron/manganese superoxide dismutase family. As to quaternary structure, homotetramer. The cofactor is Mn(2+).

The protein resides in the mitochondrion matrix. It catalyses the reaction 2 superoxide + 2 H(+) = H2O2 + O2. Destroys superoxide anion radicals which are normally produced within the cells and which are toxic to biological systems. The chain is Superoxide dismutase [Mn], mitochondrial from Apostichopus californicus (California sea cucumber).